A 625-amino-acid chain; its full sequence is MDPEGTPGEGVGCTGWFNVEAIVERKTGDVVSEDEDDTEDTGIDLVDFIDDTCGSVQTGDEAPGALLHAQETQAHAEAVQVLKRKFVGSPAVSPLGNYNPCVDRDLSPRLNEISLNQGSGQAKRRLFLPDSGYGNTEVETSLLQVAGGGGQDVQAGGKENTRPDDGGGDATQLLRCSNLKATLLSKFKSVYGVSFSELVRSFKSDRTTCADWVVGAAGVHHSVAEGLKQLIQPFCSYAHIQCLTCDWGVYLLLLARFKCGKNRLTVSKCMSTLLNVQETHMLIEPPKLRSAAAALYWYRTGISNVSEVIGETPEWITRQTMFQHGLEDSIFDLSEMVQWAYDHDFTDDSVIAYEYAQLAGIDSNAAAFLKSNAQAKYVKDCATMCRHYKRAERQQMTMSQWIKQRCEKTDDGGDWRPIVQFLRYQGVEFIAFLAALKLFLKGIPKKNCIVLFGPPNTGKSYFGMSLIHFLQGSIISYVNSNSHFWLQPLADAKVAMLDDATPQCWSYIDNYLRNALDGNPISVDRKHKNLVQMKCPPLLITSNTNAGQDDRWMYLHSRMVVFTFEQPFPFDQNGNPVYELNDKNWKSFFSRTWSRLDLQEEEETENDGSTCRAFKCVAGQNLRTV.

Positions 83-85 (KRK) match the Nuclear localization signal motif. Phosphoserine; by host occurs at positions 89, 93, and 107. A Nuclear export signal motif is present at residues 106 to 115 (LSPRLNEISL). Residues 147–169 (GGGGQDVQAGGKENTRPDDGGGD) form a disordered region. Residues 162-328 (RPDDGGGDAT…QTMFQHGLED (167 aa)) are DNA-binding region. An SF3 helicase domain is found at 427 to 577 (VEFIAFLAAL…FPFDQNGNPV (151 aa)). 453–460 (GPPNTGKS) provides a ligand contact to ATP. Lys-534 is covalently cross-linked (Glycyl lysine isopeptide (Lys-Gly) (interchain with G-Cter in SUMO)).

Belongs to the papillomaviridae E1 protein family. Can form hexamers. Interacts with E2 protein; this interaction increases E1 DNA binding specificity. Interacts with host DNA polymerase subunit POLA2. Interacts with host single stranded DNA-binding protein RPA1. Interacts with host TOP1; this interaction stimulates the enzymatic activity of TOP1. In terms of processing, phosphorylated. Post-translationally, sumoylated.

Its subcellular location is the host nucleus. It catalyses the reaction Couples ATP hydrolysis with the unwinding of duplex DNA by translocating in the 3'-5' direction.. It carries out the reaction ATP + H2O = ADP + phosphate + H(+). Functionally, ATP-dependent DNA 3'-5' helicase required for initiation of viral DNA replication. It forms a complex with the viral E2 protein. The E1-E2 complex binds to the replication origin which contains binding sites for both proteins. During the initial step, a dimer of E1 interacts with a dimer of protein E2 leading to a complex that binds the viral origin of replication with high specificity. Then, a second dimer of E1 displaces the E2 dimer in an ATP-dependent manner to form the E1 tetramer. Following this, two E1 monomers are added to each half of the site, which results in the formation of two E1 trimers on the viral ori. Subsequently, two hexamers will be created. The double hexamer acts as a bi-directional helicase machinery and unwinds the viral DNA and then recruits the host DNA polymerase to start replication. The polypeptide is Replication protein E1 (Macaca mulatta (Rhesus macaque)).